The following is a 97-amino-acid chain: Small integral membrane protein 8 (97 aa).

The tract at residues 1–22 (MSSAPEPPAFKKEPPKEKDLGN) is disordered. The segment covering 9–20 (AFKKEPPKEKDL) has biased composition (basic and acidic residues). The chain crosses the membrane as a helical span at residues 48 to 70 (PVMAFGLITISLCVAYIGYLHAT).

Belongs to the SMIM8 family.

It is found in the membrane. The sequence is that of Small integral membrane protein 8 (SMIM8) from Bos taurus (Bovine).